Here is a 557-residue protein sequence, read N- to C-terminus: CDP-diacylglycerol--glycerol-3-phosphate 3-phosphatidyltransferase, mitochondrial (557 aa).

Residues M1–A25 constitute a mitochondrion transit peptide. A121–G128 provides a ligand contact to ATP. The 27-residue stretch at T212–Y238 folds into the PLD phosphodiesterase 1 domain. Residues H217, K219, and D224 contribute to the active site. The tract at residues T322–P346 is disordered. Over residues F323–L333 the composition is skewed to polar residues. The segment covering H336 to P346 has biased composition (basic and acidic residues). Positions A461 to S494 constitute a PLD phosphodiesterase 2 domain.

Belongs to the CDP-alcohol phosphatidyltransferase class-II family.

The protein resides in the mitochondrion. It catalyses the reaction a CDP-1,2-diacyl-sn-glycerol + sn-glycerol 3-phosphate = a 1,2-diacyl-sn-glycero-3-phospho-(1'-sn-glycero-3'-phosphate) + CMP + H(+). The protein operates within phospholipid metabolism; phosphatidylglycerol biosynthesis; phosphatidylglycerol from CDP-diacylglycerol: step 1/2. Its activity is regulated as follows. Activated by calcium and magnesium and inhibited by other bivalent cations. Its function is as follows. Functions in the biosynthesis of the anionic phospholipids phosphatidylglycerol and cardiolipin. The sequence is that of CDP-diacylglycerol--glycerol-3-phosphate 3-phosphatidyltransferase, mitochondrial (PGS1) from Gallus gallus (Chicken).